A 335-amino-acid polypeptide reads, in one-letter code: Acetyl-coenzyme A carboxylase carboxyl transferase subunit alpha (335 aa).

Positions 48–308 constitute a CoA carboxyltransferase C-terminal domain; the sequence is TLEKKVDALR…KGMLIEELKA (261 aa).

This sequence belongs to the AccA family. Acetyl-CoA carboxylase is a heterohexamer composed of biotin carboxyl carrier protein (AccB), biotin carboxylase (AccC) and two subunits each of ACCase subunit alpha (AccA) and ACCase subunit beta (AccD).

The protein resides in the cytoplasm. It catalyses the reaction N(6)-carboxybiotinyl-L-lysyl-[protein] + acetyl-CoA = N(6)-biotinyl-L-lysyl-[protein] + malonyl-CoA. The protein operates within lipid metabolism; malonyl-CoA biosynthesis; malonyl-CoA from acetyl-CoA: step 1/1. Component of the acetyl coenzyme A carboxylase (ACC) complex. First, biotin carboxylase catalyzes the carboxylation of biotin on its carrier protein (BCCP) and then the CO(2) group is transferred by the carboxyltransferase to acetyl-CoA to form malonyl-CoA. In Chlorobium luteolum (strain DSM 273 / BCRC 81028 / 2530) (Pelodictyon luteolum), this protein is Acetyl-coenzyme A carboxylase carboxyl transferase subunit alpha.